The following is an 830-amino-acid chain: Lon protease (830 aa).

Residues 1–28 (MTFDTNDDSIAKNSLAPYNQETEQQQEE) are disordered. A Lon N-terminal domain is found at 50-245 (IPILPLRDVV…LVITHLTHEA (196 aa)). An ATP-binding site is contributed by 397 to 404 (GPPGVGKT). The Lon proteolytic domain occupies 633 to 814 (TLPPGVALGL…DEVLPLAFSE (182 aa)). Residues serine 720 and lysine 763 contribute to the active site.

The protein belongs to the peptidase S16 family. In terms of assembly, homohexamer. Organized in a ring with a central cavity.

The protein localises to the cytoplasm. The enzyme catalyses Hydrolysis of proteins in presence of ATP.. In terms of biological role, ATP-dependent serine protease that mediates the selective degradation of mutant and abnormal proteins as well as certain short-lived regulatory proteins. Required for cellular homeostasis and for survival from DNA damage and developmental changes induced by stress. Degrades polypeptides processively to yield small peptide fragments that are 5 to 10 amino acids long. Binds to DNA in a double-stranded, site-specific manner. This chain is Lon protease, found in Lawsonia intracellularis (strain PHE/MN1-00).